A 1300-amino-acid chain; its full sequence is MVVGSNHTRRGETGSRFTNSSSSSSTSGGPTASASSTTSVTSSLATNSTSTSTAAALLSSMSHKSHGPPPSAPPSAHHQTNQQHHQVAHSQPHATHYQQTNQHPSHHHQSHQSSNGSGGGSAGSGSGSGSVVSGLNGCNGSAVSRLSQSTGMSPRELSENDDLATSLILDPHLGFQTHKMNIRFRPLKVDTQQLKAIVDDFIHTQNYDIAIQRIYEGPWIPRHLKNKNKIATKRLHDHIVRYLRVFDKDSGFAIEACYRYTLEEQRGAKISSTKRWSKNDKIECLVGCIAELTEAEEAALLHSGKNDFSVMYSCRKNCAQLWLGPAAYINHDCRANCKFLATGRDTACVKVLRDIEVGEEITCFYGEDFFGDSNRYCECETCERRGTGAFAGKDDGLMLGLSMGLGLASSGPGNNGGYRLRETDNRINRIKSRANSTNSTSNSNSNTNDSTGPSETSSTNGLVASGGAGGATGAAMLPTPSQQSTGGKEATAAVSLLEKKLPNVVVSPLTMKELRQKGMTKYDAEMIMANAAYQQQHHHQHHFHHHHHHHHHHHNHGQHASTGAEATAAVQQMAAMQKPGVGGTGAAGNAGATTVSSVAAGAGSEVNGGRSTSLRKSMRVNSTSSSISTASADEVIAPVVAASISLPSKAPVVLMPRCKPAQMAIAALHQSQQRQLRRSERQKEKLTDGESSDTSSEQQKKEQKQQDHQLPQKMFSLAEEPQPEKSEEKQQEQQKRVTRNSAGRVGLVARLATAHNNNIATTTNSSSSSNKATTITNCNNHNSNNSSRINHNSNLSSRLSVKSRKPAPSEASSIPSSTSSENQQQQATRRSCSPTPAYKKNLLASFDPDPPSTQGIKEQLKDESVTYSPVKQKRSRRAAALAAAQSIHCEALGGFPTGSTGSQRKRAQAGEPTTSCSSTTISNVEPLLKTPERRLKLTLRMKRSPILDEVIELGTSLSNGGAGRGAPGSHREGTAGEGSVRSALNLTGSSSNGIEYEILRMEGISEHGNDDDEDEEEDDEEPAAEEEEEPPPKEELQLVNKKQRKKQRSRSRSSQRRSPAPSSVYGTPQKKRLRLIFGNESHTIDIPPAAAEGSGSGLDDLNSSGGGGDESFNASYASSTSLTVNTSSSSTSSSSGVGGATSTSAEPVDSSTVGPPIAAQSPSSTTSSSFQSACTSTTNSNSYFPNGKQRAAGEDSYAMHYYQLGKFAGTPSPGQGQAIVSSSSGSSGGGGSGAGFLSMPKHTFGTCALLAPTSFACLQNQPQISQQKTSSGGGAGVVPTSTSTGAVTSHHHTNNHHGQK.

Positions 1–136 are disordered; it reads MVVGSNHTRR…GSGSVVSGLN (136 aa). Over residues 14–62 the composition is skewed to low complexity; that stretch reads GSRFTNSSSSSSTSGGPTASASSTTSVTSSLATNSTSTSTAAALLSSMS. Positions 79–97 are enriched in polar residues; sequence QTNQQHHQVAHSQPHATHY. Residues 116–128 are compositionally biased toward gly residues; the sequence is GSGGGSAGSGSGS. The SET domain maps to 255–366; it reads EACYRYTLEE…VGEEITCFYG (112 aa). Disordered stretches follow at residues 432 to 490, 535 to 574, 669 to 744, 756 to 856, and 891 to 927; these read SRAN…GKEA, QQHH…QQMA, HQSQ…SAGR, NNNI…TQGI, and ALGG…VEPL. The segment covering 435–451 has biased composition (low complexity); that stretch reads NSTNSTSNSNSNTNDST. A compositionally biased stretch (polar residues) spans 452–462; the sequence is GPSETSSTNGL. The segment covering 536 to 557 has biased composition (basic residues); sequence QHHHQHHFHHHHHHHHHHHNHG. The span at 564–574 shows a compositional bias: low complexity; the sequence is AEATAAVQQMA. 3 stretches are compositionally biased toward basic and acidic residues: residues 677-688, 698-707, and 722-735; these read RRSERQKEKLTD, QQKKEQKQQD, and QPEK…EQQK. Positions 756–821 are enriched in low complexity; sequence NNNIATTTNS…SSIPSSTSSE (66 aa). Polar residues-rich tracts occupy residues 822–834 and 911–923; these read NQQQ…SCSP and EPTT…TISN. Phosphoserine occurs at positions 831 and 833. Position 930 is a phosphothreonine (Thr-930). Disordered stretches follow at residues 956–988, 1006–1188, 1212–1233, and 1263–1300; these read SLSN…NLTG, EHGN…PNGK, SPGQ…GGSG, and QISQ…HGQK. The span at 1009–1029 shows a compositional bias: acidic residues; that stretch reads NDDDEDEEEDDEEPAAEEEEE. A compositionally biased stretch (basic residues) spans 1041–1055; sequence KKQRKKQRSRSRSSQ. Composition is skewed to low complexity over residues 1117–1145 and 1161–1178; these read ASST…STSA and SPSS…TSTT. The segment covering 1289-1300 has biased composition (basic residues); the sequence is SHHHTNNHHGQK.

It belongs to the class V-like SAM-binding methyltransferase superfamily. Histone-lysine methyltransferase family. Suvar4-20 subfamily.

The protein localises to the nucleus. It is found in the chromosome. The enzyme catalyses L-lysyl(20)-[histone H4] + S-adenosyl-L-methionine = N(6)-methyl-L-lysyl(20)-[histone H4] + S-adenosyl-L-homocysteine + H(+). It carries out the reaction N(6)-methyl-L-lysyl(20)-[histone H4] + S-adenosyl-L-methionine = N(6),N(6)-dimethyl-L-lysyl(20)-[histone H4] + S-adenosyl-L-homocysteine + H(+). It catalyses the reaction N(6),N(6)-dimethyl-L-lysyl(20)-[histone H4] + S-adenosyl-L-methionine = N(6),N(6),N(6)-trimethyl-L-lysyl(20)-[histone H4] + S-adenosyl-L-homocysteine + H(+). Histone methyltransferase that specifically trimethylates 'Lys-20' of histone H4. H4 'Lys-20' trimethylation represents a specific tag for epigenetic transcriptional repression. Mainly functions in pericentric heterochromatin regions, thereby playing a central role in the establishment of constitutive heterochromatin in these regions. Acts as a dominant suppressor of position-effect variegation. This Drosophila melanogaster (Fruit fly) protein is Histone-lysine N-methyltransferase Suv4-20 (Hmt4-20).